We begin with the raw amino-acid sequence, 236 residues long: Venom metalloproteinase antarease-like TfasMP_A (236 aa).

The Peptidase M12B domain maps to 4 to 232; the sequence is IVVEYYIVTD…KPAASCIFEQ (229 aa). His-161 lines the Zn(2+) pocket. Glu-162 is an active-site residue. Residues His-165 and His-171 each coordinate Zn(2+).

It belongs to the venom metalloproteinase (M12B) family. It depends on Zn(2+) as a cofactor. Contains several disulfide bonds. Expressed by the venom gland.

The protein localises to the secreted. Inhibited by EDTA. Acts as a metalloprotease. Penetrates intact tissue and specifically cleaves the vesicle-associated membrane protein 2 (VAMP2) (part of the SNARE complex) involved in pancreatic secretion, thus disrupting the normal vesicular traffic. The polypeptide is Venom metalloproteinase antarease-like TfasMP_A (Tityus fasciolatus (Central Brazilian scorpion)).